The primary structure comprises 493 residues: Membrane-bound lytic murein transglycosylase F (493 aa).

The N-terminal stretch at 1–21 (MKRLRFNYLLIGLITVLLALA) is a signal peptide. Positions 22–268 (LWPSIPWYGG…RLDEKYLGHV (247 aa)) are non-LT domain. Residues 269–493 (GTFDYVDTRT…LNPVSALPLP (225 aa)) are LT domain. Glu-313 is an active-site residue.

In the N-terminal section; belongs to the bacterial solute-binding protein 3 family. The protein in the C-terminal section; belongs to the transglycosylase Slt family.

It localises to the cell outer membrane. The catalysed reaction is Exolytic cleavage of the (1-&gt;4)-beta-glycosidic linkage between N-acetylmuramic acid (MurNAc) and N-acetylglucosamine (GlcNAc) residues in peptidoglycan, from either the reducing or the non-reducing ends of the peptidoglycan chains, with concomitant formation of a 1,6-anhydrobond in the MurNAc residue.. Murein-degrading enzyme that degrades murein glycan strands and insoluble, high-molecular weight murein sacculi, with the concomitant formation of a 1,6-anhydromuramoyl product. Lytic transglycosylases (LTs) play an integral role in the metabolism of the peptidoglycan (PG) sacculus. Their lytic action creates space within the PG sacculus to allow for its expansion as well as for the insertion of various structures such as secretion systems and flagella. This is Membrane-bound lytic murein transglycosylase F from Erwinia tasmaniensis (strain DSM 17950 / CFBP 7177 / CIP 109463 / NCPPB 4357 / Et1/99).